The sequence spans 162 residues: Caveolin-2 (162 aa).

At 1–86 (MGLETEKADV…FEISKYVMYK (86 aa)) the chain is on the cytoplasmic side. Tyr-19 bears the Phosphotyrosine; by SRC mark. Ser-20 and Ser-23 each carry phosphoserine. Position 27 is a phosphotyrosine; by SRC (Tyr-27). Position 36 is a phosphoserine (Ser-36). The segment at residues 87–107 (FLTVFLAIPLAFIAGILFATL) is an intramembrane region (helical). Topologically, residues 108–162 (SCLHIWILMPFVKTCLMVLPSVQTIWKSVTDVFIAPLCTSIGRSFSSVSLQLSQD) are cytoplasmic.

This sequence belongs to the caveolin family. In terms of assembly, monomer or homodimer. Interacts with CAV1; the interaction forms a stable heterooligomeric complex that is required for targeting to lipid rafts and for caveolae formation. Tyrosine phosphorylated forms do not form heterooligomers with the Tyr-19-phosphorylated form existing as a monomer or dimer, and the Tyr-27-form as a monomer only. Interacts (tyrosine phosphorylated form) with the SH2 domain-containing proteins, RASA1, NCK1 and SRC. Interacts (tyrosine phosphorylated form) with INSR, the interaction (Tyr-27-phosphorylated form) is increased on insulin stimulation. Interacts (Tyr-19 phosphorylated form) with MAPK1 (phosphorylated form); the interaction, promoted by insulin, leads to nuclear location and MAPK1 activation. Interacts with STAT3; the interaction is increased on insulin-induced tyrosine phosphorylation leading to STAT activation. In terms of processing, phosphorylated on serine and tyrosine residues. CAV1 promotes phosphorylation on Ser-23 which then targets the complex to the plasma membrane, lipid rafts and caveolae. Phosphorylation on Ser-36 appears to modulate mitosis in endothelial cells. Phosphorylation on both Tyr-19 and Tyr-27 is required for insulin-induced 'Ser-727' phosphorylation of STAT3 and its activation. Phosphorylation on Tyr-19 is required for insulin-induced phosphorylation of MAPK1 and DNA binding of STAT3. Tyrosine phosphorylation is induced by both EGF and insulin (By. similarity).

It localises to the nucleus. Its subcellular location is the cytoplasm. The protein resides in the golgi apparatus membrane. The protein localises to the cell membrane. It is found in the membrane. It localises to the caveola. Its function is as follows. May act as a scaffolding protein within caveolar membranes. Interacts directly with G-protein alpha subunits and can functionally regulate their activity. Acts as an accessory protein in conjunction with CAV1 in targeting to lipid rafts and driving caveolae formation. The Ser-36 phosphorylated form has a role in modulating mitosis in endothelial cells. Positive regulator of cellular mitogenesis of the MAPK signaling pathway. Required for the insulin-stimulated nuclear translocation and activation of MAPK1 and STAT3, and the subsequent regulation of cell cycle progression. In Papio anubis (Olive baboon), this protein is Caveolin-2 (CAV2).